Reading from the N-terminus, the 245-residue chain is MKKNIKYSQNFLTNEKVLNQIIKQLNLKETDTVYEIGTGKGHLTTKLAKISKQVTSIELDSHLFNLSSEKLKLNIRVTLIHQDILQFQFPNKQRYKIVGSIPYHLSTQIIKKVVFESHASDIYLIVEEGFYKRTLDIHRSLGLLLHTQVSIQQLLKLPAECFHPKPKVNSVLIKLTRHTTDVPDKYWKLYTYFVSKWVNREYRQLFTKNQFHQAMKHAKVNNLSTVTYEQVLSIFNSYLLFNGRK.

The S-adenosyl-L-methionine site is built by Asn10, Leu12, Gly37, Glu58, Asp83, and Ser100.

It belongs to the class I-like SAM-binding methyltransferase superfamily. rRNA adenine N(6)-methyltransferase family.

The catalysed reaction is adenosine(2085) in 23S rRNA + 2 S-adenosyl-L-methionine = N(6)-dimethyladenosine(2085) in 23S rRNA + 2 S-adenosyl-L-homocysteine + 2 H(+). Functionally, this protein produces a dimethylation of the adenine residue at position 2085 in 23S rRNA, resulting in reduced affinity between ribosomes and macrolide-lincosamide-streptogramin B antibiotics. This is rRNA adenine N-6-methyltransferase from Streptococcus sanguinis.